The chain runs to 287 residues: Large ribosomal subunit protein uL3 (287 aa).

A disordered region spans residues 228–287; sequence KAPEAKPAKLSKKKQAKELAKAQAANQQTVEAKVDTPVVEPKPTEVKKAAPVVEKKGEDK. The span at 269-287 shows a compositional bias: basic and acidic residues; the sequence is KPTEVKKAAPVVEKKGEDK.

It belongs to the universal ribosomal protein uL3 family. As to quaternary structure, part of the 50S ribosomal subunit. Forms a cluster with proteins L14 and L19.

In terms of biological role, one of the primary rRNA binding proteins, it binds directly near the 3'-end of the 23S rRNA, where it nucleates assembly of the 50S subunit. The chain is Large ribosomal subunit protein uL3 from Mycoplasma pneumoniae (strain ATCC 29342 / M129 / Subtype 1) (Mycoplasmoides pneumoniae).